Reading from the N-terminus, the 406-residue chain is Tryptophan synthase beta chain (406 aa).

Lysine 97 carries the post-translational modification N6-(pyridoxal phosphate)lysine.

It belongs to the TrpB family. As to quaternary structure, tetramer of two alpha and two beta chains. It depends on pyridoxal 5'-phosphate as a cofactor.

The catalysed reaction is (1S,2R)-1-C-(indol-3-yl)glycerol 3-phosphate + L-serine = D-glyceraldehyde 3-phosphate + L-tryptophan + H2O. Its pathway is amino-acid biosynthesis; L-tryptophan biosynthesis; L-tryptophan from chorismate: step 5/5. Functionally, the beta subunit is responsible for the synthesis of L-tryptophan from indole and L-serine. This is Tryptophan synthase beta chain from Lacticaseibacillus casei (strain BL23) (Lactobacillus casei).